Reading from the N-terminus, the 500-residue chain is Probable cytosol aminopeptidase (500 aa).

Positions 264 and 269 each coordinate Mn(2+). Residue lysine 276 is part of the active site. Mn(2+)-binding residues include aspartate 287, aspartate 346, and glutamate 348. The active site involves arginine 350.

It belongs to the peptidase M17 family. Mn(2+) is required as a cofactor.

It is found in the cytoplasm. The enzyme catalyses Release of an N-terminal amino acid, Xaa-|-Yaa-, in which Xaa is preferably Leu, but may be other amino acids including Pro although not Arg or Lys, and Yaa may be Pro. Amino acid amides and methyl esters are also readily hydrolyzed, but rates on arylamides are exceedingly low.. The catalysed reaction is Release of an N-terminal amino acid, preferentially leucine, but not glutamic or aspartic acids.. Its function is as follows. Presumably involved in the processing and regular turnover of intracellular proteins. Catalyzes the removal of unsubstituted N-terminal amino acids from various peptides. In Rhodopseudomonas palustris (strain TIE-1), this protein is Probable cytosol aminopeptidase.